The chain runs to 69 residues: Large ribosomal subunit protein bL28 (69 aa).

Belongs to the bacterial ribosomal protein bL28 family.

The chain is Large ribosomal subunit protein bL28 from Desulfovibrio desulfuricans (strain ATCC 27774 / DSM 6949 / MB).